Reading from the N-terminus, the 200-residue chain is Elongation factor Ts (200 aa).

The tract at residues 82-85 (TDFV) is involved in Mg(2+) ion dislocation from EF-Tu.

This sequence belongs to the EF-Ts family.

It localises to the cytoplasm. Functionally, associates with the EF-Tu.GDP complex and induces the exchange of GDP to GTP. It remains bound to the aminoacyl-tRNA.EF-Tu.GTP complex up to the GTP hydrolysis stage on the ribosome. This is Elongation factor Ts from Solidesulfovibrio magneticus (strain ATCC 700980 / DSM 13731 / RS-1) (Desulfovibrio magneticus).